The primary structure comprises 418 residues: Tyrosine--tRNA ligase (418 aa).

Position 34 (Tyr34) interacts with L-tyrosine. Positions 39–48 (PTADSLHLGH) match the 'HIGH' region motif. 2 residues coordinate L-tyrosine: Tyr169 and Gln173. The 'KMSKS' region motif lies at 229 to 233 (KFGKS). Residue Lys232 participates in ATP binding. The S4 RNA-binding domain occupies 352 to 418 (HNIVEILVAA…GKKKYAVLTY (67 aa)).

Belongs to the class-I aminoacyl-tRNA synthetase family. TyrS type 1 subfamily. In terms of assembly, homodimer.

Its subcellular location is the cytoplasm. It carries out the reaction tRNA(Tyr) + L-tyrosine + ATP = L-tyrosyl-tRNA(Tyr) + AMP + diphosphate + H(+). Catalyzes the attachment of tyrosine to tRNA(Tyr) in a two-step reaction: tyrosine is first activated by ATP to form Tyr-AMP and then transferred to the acceptor end of tRNA(Tyr). The protein is Tyrosine--tRNA ligase of Streptococcus pyogenes serotype M49 (strain NZ131).